Consider the following 382-residue polypeptide: Dual-specificity RNA methyltransferase RlmN (382 aa).

Glu-96 acts as the Proton acceptor in catalysis. The region spanning 102–342 (QGKRGTLCVS…VRTTRGEDID (241 aa)) is the Radical SAM core domain. Cysteines 109 and 345 form a disulfide. [4Fe-4S] cluster contacts are provided by Cys-116, Cys-120, and Cys-123. Residues 170-171 (GE), Ser-202, 224-226 (SLH), and Asn-302 each bind S-adenosyl-L-methionine. Cys-345 serves as the catalytic S-methylcysteine intermediate.

It belongs to the radical SAM superfamily. RlmN family. Requires [4Fe-4S] cluster as cofactor.

The protein localises to the cytoplasm. The enzyme catalyses adenosine(2503) in 23S rRNA + 2 reduced [2Fe-2S]-[ferredoxin] + 2 S-adenosyl-L-methionine = 2-methyladenosine(2503) in 23S rRNA + 5'-deoxyadenosine + L-methionine + 2 oxidized [2Fe-2S]-[ferredoxin] + S-adenosyl-L-homocysteine. It catalyses the reaction adenosine(37) in tRNA + 2 reduced [2Fe-2S]-[ferredoxin] + 2 S-adenosyl-L-methionine = 2-methyladenosine(37) in tRNA + 5'-deoxyadenosine + L-methionine + 2 oxidized [2Fe-2S]-[ferredoxin] + S-adenosyl-L-homocysteine. In terms of biological role, specifically methylates position 2 of adenine 2503 in 23S rRNA and position 2 of adenine 37 in tRNAs. m2A2503 modification seems to play a crucial role in the proofreading step occurring at the peptidyl transferase center and thus would serve to optimize ribosomal fidelity. The sequence is that of Dual-specificity RNA methyltransferase RlmN from Pseudomonas syringae pv. tomato (strain ATCC BAA-871 / DC3000).